A 468-amino-acid polypeptide reads, in one-letter code: UDP-N-acetylmuramate--L-alanine ligase (468 aa).

114–120 (GTHGKTT) contacts ATP.

The protein belongs to the MurCDEF family.

The protein localises to the cytoplasm. It catalyses the reaction UDP-N-acetyl-alpha-D-muramate + L-alanine + ATP = UDP-N-acetyl-alpha-D-muramoyl-L-alanine + ADP + phosphate + H(+). The protein operates within cell wall biogenesis; peptidoglycan biosynthesis. Functionally, cell wall formation. The sequence is that of UDP-N-acetylmuramate--L-alanine ligase from Methylorubrum populi (strain ATCC BAA-705 / NCIMB 13946 / BJ001) (Methylobacterium populi).